The primary structure comprises 387 residues: Phosphoglycerate kinase (387 aa).

Residues 21-23, Arg-36, 59-62, Arg-113, and Arg-146 each bind substrate; these read DLN and HLGR. ATP-binding positions include Lys-197, Glu-314, and 340–343; that span reads GGDT.

It belongs to the phosphoglycerate kinase family. As to quaternary structure, monomer.

It localises to the cytoplasm. It carries out the reaction (2R)-3-phosphoglycerate + ATP = (2R)-3-phospho-glyceroyl phosphate + ADP. It participates in carbohydrate degradation; glycolysis; pyruvate from D-glyceraldehyde 3-phosphate: step 2/5. The sequence is that of Phosphoglycerate kinase from Aeromonas salmonicida (strain A449).